A 242-amino-acid chain; its full sequence is Glucosamine-6-phosphate deaminase (242 aa).

Catalysis depends on aspartate 67, which acts as the Proton acceptor; for enolization step. Residue asparagine 137 is the For ring-opening step of the active site. Histidine 139 functions as the Proton acceptor; for ring-opening step in the catalytic mechanism. The active-site For ring-opening step is glutamate 144.

It belongs to the glucosamine/galactosamine-6-phosphate isomerase family. NagB subfamily.

The catalysed reaction is alpha-D-glucosamine 6-phosphate + H2O = beta-D-fructose 6-phosphate + NH4(+). It participates in amino-sugar metabolism; N-acetylneuraminate degradation; D-fructose 6-phosphate from N-acetylneuraminate: step 5/5. Catalyzes the reversible isomerization-deamination of glucosamine 6-phosphate (GlcN6P) to form fructose 6-phosphate (Fru6P) and ammonium ion. The polypeptide is Glucosamine-6-phosphate deaminase (Staphylococcus haemolyticus (strain JCSC1435)).